Here is a 359-residue protein sequence, read N- to C-terminus: POU domain, class 5, transcription factor 1B (359 aa).

Disordered regions lie at residues 1-53 and 87-116; these read MAGH…GVGP and QGGL…EPCT. Ser111 bears the Phosphoserine mark. Positions 138–212 constitute a POU-specific domain; it reads DIKALQKELE…LLQKWVEEAD (75 aa). Positions 229-288 form a DNA-binding region, homeobox; sequence ARKRKRTSIENRVRGNLENLFLQCPKPTLQISHIAQQLGLEKDVVRVWFCNRRQKGKRSS. Thr235 carries the phosphothreonine modification. Phosphoserine occurs at positions 236, 288, and 289. The interval 287 to 322 is disordered; that stretch reads SSSDYAQREDFEAAGSPFSGGPVSFPPAPGPHFGTP. A compositionally biased stretch (low complexity) spans 299–309; the sequence is AAGSPFSGGPV. Residue Ser354 is modified to Phosphoserine.

It belongs to the POU transcription factor family. Class-5 subfamily. As to expression, detected in epithelial cells of the prostate (at protein level). Detected at the mRNA level in several cancer tissues (breast, uterine cervix, lung, thyroid gland, esophagus, colon, urinary bladder, and glioma).

It localises to the nucleus. It is found in the cytoplasm. Its function is as follows. Shows weak transcriptional activator activity. This Homo sapiens (Human) protein is POU domain, class 5, transcription factor 1B (POU5F1B).